The sequence spans 279 residues: Energy-coupling factor transporter ATP-binding protein EcfA1 (279 aa).

The ABC transporter domain maps to 8-240; that stretch reads IKFENVSFSY…KQFLRDINLD (233 aa). 41–48 lines the ATP pocket; sequence GHNGSGKS.

Belongs to the ABC transporter superfamily. Energy-coupling factor EcfA family. Forms a stable energy-coupling factor (ECF) transporter complex composed of 2 membrane-embedded substrate-binding proteins (S component), 2 ATP-binding proteins (A component) and 2 transmembrane proteins (T component).

Its subcellular location is the cell membrane. ATP-binding (A) component of a common energy-coupling factor (ECF) ABC-transporter complex. Unlike classic ABC transporters this ECF transporter provides the energy necessary to transport a number of different substrates. In Mycoplasmoides gallisepticum (strain R(low / passage 15 / clone 2)) (Mycoplasma gallisepticum), this protein is Energy-coupling factor transporter ATP-binding protein EcfA1.